The primary structure comprises 255 residues: tRNA (guanine-N(1)-)-methyltransferase (255 aa).

S-adenosyl-L-methionine is bound by residues Gly-113 and 133–138 (IGDYVL).

Belongs to the RNA methyltransferase TrmD family. In terms of assembly, homodimer.

It is found in the cytoplasm. The enzyme catalyses guanosine(37) in tRNA + S-adenosyl-L-methionine = N(1)-methylguanosine(37) in tRNA + S-adenosyl-L-homocysteine + H(+). In terms of biological role, specifically methylates guanosine-37 in various tRNAs. The chain is tRNA (guanine-N(1)-)-methyltransferase from Chloroflexus aggregans (strain MD-66 / DSM 9485).